Consider the following 55-residue polypeptide: Large ribosomal subunit protein bL33 (55 aa).

Belongs to the bacterial ribosomal protein bL33 family. Part of the 50S ribosomal subunit. Contacts protein L35.

Functionally, binds the 23S rRNA and the E site tRNA. This chain is Large ribosomal subunit protein bL33 (rpmG), found in Deinococcus radiodurans (strain ATCC 13939 / DSM 20539 / JCM 16871 / CCUG 27074 / LMG 4051 / NBRC 15346 / NCIMB 9279 / VKM B-1422 / R1).